We begin with the raw amino-acid sequence, 511 residues long: MKLFWLLFTIGFCWAQYSSNTQQGRTSIVHLFEWRWVDIALECERYLAPKGFGGVQVSPPNENVAIHNPFRPWWERYQPVSYKLCTRSGNEDEFRNMVTRCNNVGVRIYVDAVINHMCGNAVSAGTSSTCGSYFNPGSRDFPAVPYSGWDFNDGKCKTGSGDIENYNDATQVRDCRLSGLLDLALGKDYVRSKIAEYMNHLIDIGVAGFRIDASKHMWPGDIKAILDKLHNLNSNWFPEGSKPFIYQEVIDLGGEPIKSSDYFGNGRVTEFKYGAKLGTVIRKWNGEKMSYLKNWGEGWGFMPSDRALVFVDNHDNQRGHGAGGASILTFWDARLYKMAVGFMLAHPYGFTRVMSSYRWPRYFENGKDVNDWVGPPNDNGVTKEVTINPDTTCGNDWVCEHRWRQIRNMVNFRNVVDGQPFTNWYDNGSNQVAFGRGNRGFIVFNNDDWTFSLTLQTGLPAGTYCDVISGDKINGNCTGIKIYVSDDGKAHFSISNSAEDPFIAIHAESKL.

Positions 1–15 are cleaved as a signal peptide; it reads MKLFWLLFTIGFCWA. The residue at position 16 (Q16) is a Pyrrolidone carboxylic acid. 3 cysteine pairs are disulfide-bonded: C43–C101, C85–C130, and C156–C175. Residues N115, R173, and D182 each coordinate Ca(2+). Position 210 (R210) interacts with chloride. Catalysis depends on D212, which acts as the Nucleophile. H216 serves as a coordination point for Ca(2+). E248 functions as the Proton donor in the catalytic mechanism. Positions 313 and 352 each coordinate chloride. A Deamidated asparagine; partial modification is found at N365. An intrachain disulfide couples C393 to C399. A Deamidated asparagine; partial; alternate modification is found at N427. N427 is a glycosylation site (N-linked (GlcNAc...) asparagine). C465 and C477 form a disulfide bridge. N474 is modified (deamidated asparagine; partial). An N-linked (GlcNAc...) asparagine glycan is attached at N476.

The protein belongs to the glycosyl hydrolase 13 family. As to quaternary structure, monomer. It depends on Ca(2+) as a cofactor. The cofactor is chloride.

Its subcellular location is the secreted. The enzyme catalyses Endohydrolysis of (1-&gt;4)-alpha-D-glucosidic linkages in polysaccharides containing three or more (1-&gt;4)-alpha-linked D-glucose units.. Calcium-binding enzyme that initiates starch digestion in the oral cavity. Catalyzes the hydrolysis of internal (1-&gt;4)-alpha-D-glucosidic bonds, yielding a mixture of maltose, isomaltose, small amounts of glucose as well as small linear and branched oligosaccharides called dextrins. The polypeptide is Alpha-amylase 1A (Homo sapiens (Human)).